Reading from the N-terminus, the 129-residue chain is Small ribosomal subunit protein uS12 (129 aa).

Aspartate 89 carries the post-translational modification 3-methylthioaspartic acid. The segment at 110-129 (RKQGRSRYGAPRKQVVATKK) is disordered.

It belongs to the universal ribosomal protein uS12 family. Part of the 30S ribosomal subunit. Contacts proteins S8 and S17. May interact with IF1 in the 30S initiation complex.

Functionally, with S4 and S5 plays an important role in translational accuracy. Its function is as follows. Interacts with and stabilizes bases of the 16S rRNA that are involved in tRNA selection in the A site and with the mRNA backbone. Located at the interface of the 30S and 50S subunits, it traverses the body of the 30S subunit contacting proteins on the other side and probably holding the rRNA structure together. The combined cluster of proteins S8, S12 and S17 appears to hold together the shoulder and platform of the 30S subunit. The protein is Small ribosomal subunit protein uS12 of Rickettsia bellii (strain OSU 85-389).